The primary structure comprises 880 residues: MOG interacting and ectopic P-granules protein 1 (880 aa).

Residues 1–20 (MVTSDETVLATTTNKTSITT) show a composition bias toward polar residues. Disordered stretches follow at residues 1–37 (MVTS…SETD), 82–257 (DKVE…DDNE), and 350–370 (ERPK…QHNP). Over residues 23–37 (MEPKSSDESTDSETD) the composition is skewed to basic and acidic residues. Polar residues predominate over residues 87–105 (ATNSVVDLSSNGSSATTSV). Residues 108-120 (EEQEEKANEDETN) are compositionally biased toward acidic residues. 2 stretches are compositionally biased toward basic and acidic residues: residues 154–170 (SKSD…IKDS) and 183–193 (KPEEKEEKNDT). Residues 215–224 (QLDDDDDDIQ) show a composition bias toward acidic residues. Composition is skewed to basic and acidic residues over residues 235-252 (QKTE…KAEP) and 350-364 (ERPK…ERQQ). 2 consecutive C2H2-type zinc fingers follow at residues 436–459 (SRCG…ETLH) and 465–488 (FQCT…FEAH). The CCHC-type zinc-finger motif lies at 501–523 (YPCAICEEDFNFKGVREQHYKQC). 4 consecutive C2H2-type zinc fingers follow at residues 728–751 (FQCE…QVLH), 768–791 (LACS…VMSH), 809–830 (GRCK…VADH), and 841–864 (YSCD…SSTH).

Interacts with hda-1, let-418, lin-1, mog-1, mog-4, mog-5, mog-6, pie-1 and unc-98.

The protein resides in the nucleus. Functionally, has a broad role in development, specifically in the genetic pathway SynMuvB that negatively regulates specification of the vulval cell fate. Required for fem-3 3'-UTR-mediated repression in the regulation of the sperm/oocyte switch. Acts by regulating the translation of fem-3 mRNA, by binding to its 3'-UTR. The protein is MOG interacting and ectopic P-granules protein 1 of Caenorhabditis briggsae.